An 861-amino-acid polypeptide reads, in one-letter code: Translation initiation factor IF-2 (861 aa).

The segment at Ala-107–Gln-272 is disordered. Residues Arg-115–Glu-128 are compositionally biased toward basic and acidic residues. Composition is skewed to polar residues over residues Ser-148–Thr-158 and Val-169–Gly-180. Residues Asn-210–Arg-228 are compositionally biased toward basic and acidic residues. The span at Arg-260–Lys-269 shows a compositional bias: basic residues. The tr-type G domain maps to Ser-362–Thr-531. A G1 region spans residues Gly-371 to Thr-378. Gly-371–Thr-378 contributes to the GTP binding site. Positions Gly-396–His-400 are G2. The segment at Asp-417–Gly-420 is G3. GTP contacts are provided by residues Asp-417 to His-421 and Asn-471 to Asp-474. The G4 stretch occupies residues Asn-471–Asp-474. The interval Ser-507–His-509 is G5.

Belongs to the TRAFAC class translation factor GTPase superfamily. Classic translation factor GTPase family. IF-2 subfamily.

It localises to the cytoplasm. Functionally, one of the essential components for the initiation of protein synthesis. Protects formylmethionyl-tRNA from spontaneous hydrolysis and promotes its binding to the 30S ribosomal subunits. Also involved in the hydrolysis of GTP during the formation of the 70S ribosomal complex. In Hahella chejuensis (strain KCTC 2396), this protein is Translation initiation factor IF-2.